The sequence spans 89 residues: Small ribosomal subunit protein uS15 (89 aa).

Positions 1–23 (MSLGTEEKQNLINTHQVHPTDTG) are disordered. A compositionally biased stretch (polar residues) spans 10–23 (NLINTHQVHPTDTG).

It belongs to the universal ribosomal protein uS15 family. As to quaternary structure, part of the 30S ribosomal subunit. Forms a bridge to the 50S subunit in the 70S ribosome, contacting the 23S rRNA.

In terms of biological role, one of the primary rRNA binding proteins, it binds directly to 16S rRNA where it helps nucleate assembly of the platform of the 30S subunit by binding and bridging several RNA helices of the 16S rRNA. Its function is as follows. Forms an intersubunit bridge (bridge B4) with the 23S rRNA of the 50S subunit in the ribosome. The protein is Small ribosomal subunit protein uS15 of Prochlorococcus marinus (strain NATL2A).